Consider the following 309-residue polypeptide: tRNA uridine(34) hydroxylase (309 aa).

Positions 137–232 (RGDEVVFFDG…YGEKYGDKGL (96 aa)) constitute a Rhodanese domain. Cysteine 192 acts as the Cysteine persulfide intermediate in catalysis.

Belongs to the TrhO family.

It catalyses the reaction uridine(34) in tRNA + AH2 + O2 = 5-hydroxyuridine(34) in tRNA + A + H2O. Its function is as follows. Catalyzes oxygen-dependent 5-hydroxyuridine (ho5U) modification at position 34 in tRNAs. In Corynebacterium jeikeium (strain K411), this protein is tRNA uridine(34) hydroxylase.